We begin with the raw amino-acid sequence, 276 residues long: Proteasome subunit beta type-8 (276 aa).

A propeptide spans 1–72 (removed in mature form); the sequence is MALLDLCGAP…RKVQIEMAHG (72 aa). The active-site Nucleophile is the T73.

This sequence belongs to the peptidase T1B family. In terms of assembly, the 26S proteasome consists of a 20S proteasome core and two 19S regulatory subunits. The 20S proteasome core is composed of 28 subunits that are arranged in four stacked rings, resulting in a barrel-shaped structure. The two end rings are each formed by seven alpha subunits, and the two central rings are each formed by seven beta subunits. The catalytic chamber with the active sites is on the inside of the barrel. Component of the immunoproteasome, where it displaces the equivalent housekeeping subunit PSMB5. Component of the spermatoproteasome, a form of the proteasome specifically found in testis. Directly interacts with POMP. Interacts with TAP1. Autocleaved. The resulting N-terminal Thr residue of the mature subunit is responsible for the nucleophile proteolytic activity.

Its subcellular location is the cytoplasm. It is found in the nucleus. The catalysed reaction is Cleavage of peptide bonds with very broad specificity.. Functionally, the proteasome is a multicatalytic proteinase complex which is characterized by its ability to cleave peptides with Arg, Phe, Tyr, Leu, and Glu adjacent to the leaving group at neutral or slightly basic pH. The proteasome has an ATP-dependent proteolytic activity. This subunit is involved in antigen processing to generate class I binding peptides. May participate in the generation of spliced peptides resulting from the ligation of two separate proteasomal cleavage products that are not contiguous in the parental protein. Required for adipocyte differentiation. The protein is Proteasome subunit beta type-8 (Psmb8) of Rattus norvegicus (Rat).